Reading from the N-terminus, the 441-residue chain is FBD-associated F-box protein At5g18780 (441 aa).

In terms of domain architecture, F-box spans 10 to 56 (EDRISILPEPLLCHILSFLRTKDSVRTSVLSSRWRDLWLWVPRLDLD). An FBD domain is found at 366 to 410 (LPRCLISSLASVDIESPITDKATELKLVSYLLENSTTLKKLVLRL).

This chain is FBD-associated F-box protein At5g18780, found in Arabidopsis thaliana (Mouse-ear cress).